Reading from the N-terminus, the 647-residue chain is XK-related protein 4 (647 aa).

Residues 142–162 (WFGLTLFFVVLGSLSVQVFSF) form a helical membrane-spanning segment. A disordered region spans residues 193 to 238 (VSSGSAAGEGEARPSTPQRQASNASKSNIAATNSGSNSNGATRTSG). Ser-197 bears the Phosphoserine mark. The segment covering 207–236 (STPQRQASNASKSNIAATNSGSNSNGATRT) has biased composition (polar residues). 7 consecutive transmembrane segments (helical) span residues 245–265 (CSFC…GQVW), 328–348 (LQAL…WALA), 362–382 (KPIS…TIAA), 393–415 (VFQL…WIVH), 425–445 (WEEI…WFNV), 454–474 (LFIY…LWYL), and 484–504 (FAIP…VFML).

It belongs to the XK family. In terms of assembly, homodimer; homodimerization takes place upon caspase cleavage. Interacts with the processed C-terminus of XRCC4 (protein XRCC4, C-terminus); interaction promotes the phospholipid scramblase activity. In terms of processing, undergoes proteolytic processing by caspase-3 (CASP3), caspase-6 (CASP6) and caspase-7 (CASP7) to generate the XK-related protein 4, processed form, leading to its activation.

It localises to the cell membrane. It catalyses the reaction a 1,2-diacyl-sn-glycero-3-phospho-L-serine(in) = a 1,2-diacyl-sn-glycero-3-phospho-L-serine(out). With respect to regulation, phospholipid scramblase activity is activated upon caspase cleavage to generate the XK-related protein 4, processed form. Does not act prior the onset of apoptosis. Homodimerizes upon caspase cleavage. Phospholipid scramblase activity is activated following interaction with the processed C-terminus of XRCC4 (protein XRCC4, C-terminus). Phospholipid scramblase that promotes phosphatidylserine exposure on apoptotic cell surface. Phosphatidylserine is a specific marker only present at the surface of apoptotic cells and acts as a specific signal for engulfment. The polypeptide is XK-related protein 4 (Rattus norvegicus (Rat)).